A 478-amino-acid chain; its full sequence is Aspartyl/glutamyl-tRNA(Asn/Gln) amidotransferase subunit B (478 aa).

It belongs to the GatB/GatE family. GatB subfamily. Heterotrimer of A, B and C subunits.

The catalysed reaction is L-glutamyl-tRNA(Gln) + L-glutamine + ATP + H2O = L-glutaminyl-tRNA(Gln) + L-glutamate + ADP + phosphate + H(+). It catalyses the reaction L-aspartyl-tRNA(Asn) + L-glutamine + ATP + H2O = L-asparaginyl-tRNA(Asn) + L-glutamate + ADP + phosphate + 2 H(+). Its function is as follows. Allows the formation of correctly charged Asn-tRNA(Asn) or Gln-tRNA(Gln) through the transamidation of misacylated Asp-tRNA(Asn) or Glu-tRNA(Gln) in organisms which lack either or both of asparaginyl-tRNA or glutaminyl-tRNA synthetases. The reaction takes place in the presence of glutamine and ATP through an activated phospho-Asp-tRNA(Asn) or phospho-Glu-tRNA(Gln). This is Aspartyl/glutamyl-tRNA(Asn/Gln) amidotransferase subunit B from Alkalilimnicola ehrlichii (strain ATCC BAA-1101 / DSM 17681 / MLHE-1).